Reading from the N-terminus, the 49-residue chain is uncharacterized protein (49 aa).

The helical transmembrane segment at L17–S39 threads the bilayer.

It is found in the membrane. This is an uncharacterized protein from Saccharomyces cerevisiae (strain ATCC 204508 / S288c) (Baker's yeast).